A 1220-amino-acid polypeptide reads, in one-letter code: MKLKEVDRTAMQAWSPAQNHPIYLATGTSAQQLDATFSTNASLEIFELDLSDPSLDMKSCATFSSSHRYHKLIWGPYKMDSKGDVSGVLIAGGENGNIILYDPSKIIAGDKEVVIAQNDKHTGPVRALDVNIFQTNLVASGANESEIYIWDLNNFATPMTPGAKTQPPEDISCIAWNRQVQHILASASPSGRATVWDLRKNEPIIKVSDHSNRMHCSGLAWHPDVATQMVLASEDDRLPVIQMWDLRFASSPLRVLENHARGILAIAWSMADPELLLSCGKDAKILCSNPNTGEVLYELPTNTQWCFDIQWCPRNPAVLSAASFDGRISVYSIMGGSTDGLRQKQVDKLSSSFGNLDPFGTGQPLPPLQIPQQTAQHSIVLPLKKPPKWIRRPVGASFSFGGKLVTFENVRMPSHQGAEQQQQQHHVFISQVVTEKEFLSRSDQLQQAVQSQGFINYCQKKIDASQTEFEKNVWSFLKVNFEDDSRGKYLELLGYRKEDLGKKIALALNKVDGANVALKDSDQVAQSDGEESPAAEEQLLGEHIKEEKEESEFLPSSGGTFNISVSGDIDGLITQALLTGNFESAVDLCLHDNRMADAIILAIAGGQELLARTQKKYFAKSQSKITRLITAVVMKNWKEIVESCDLKNWREALAAVLTYAKPDEFSALCDLLGTRLENEGDSLLQTQACLCYICAGNVEKLVACWTKAQDGSHPLSLQDLIEKVVILRKAVQLTQAMDTSTVGVLLAAKMSQYANLLAAQGSIAAALAFLPDNTNQPNIMQLRDRLCRAQGEPVAGHESPKIPYEKQQLPKGRPGPVAGHHQMPRVQTQQYYPHGENPPPPGFIMHGNVNPNAAGQLPTSPGHMHTQVPPYPQPQPYQPAQPYPFGTGGSAMYRPQQPVAPPTSNAYPNTPYISSASSYTGQSQLYAAQHQASSPTSSPATSFPPPPSSGASFQHGGPGAPPSSSAYALPPGTTGTLPAASELPASQRTGPQNGWNDPPALNRVPKKKKMPENFMPPVPITSPIMNPLGDPQSQMLQQQPSAPVPLSSQSSFPQPHLPGGQPFHGVQQPLGQTGMPPSFSKPNIEGAPGAPIGNTFQHVQSLPTKKITKKPIPDEHLILKTTFEDLIQRCLSSATDPQTKRKLDDASKRLEFLYDKLREQTLSPTITSGLHNIARSIETRNYSEGLTMHTHIVSTSNFSETSAFMPVLKVVLTQANKLGV.

WD repeat units lie at residues 4-47, 68-111, 120-160, 166-206, 209-254, 258-298, and 301-342; these read KEVD…EIFE, RYHK…AGDK, KHTG…TPMT, QPPE…PIIK, DHSN…SPLR, NHAR…VLYE, and TNTQ…DGLR. Residues 161 to 471 form an interaction with SEC13 region; sequence PGAKTQPPED…IDASQTEFEK (311 aa). Residues 397–430 form a WD 8; interaction with SEC13 repeat; it reads SFSFGGKLVTFENVRMPSHQGAEQQQQQHHVFIS. Ser-527 and Ser-532 each carry phosphoserine. Lys-647 participates in a covalent cross-link: Glycyl lysine isopeptide (Lys-Gly) (interchain with G-Cter in ubiquitin). Disordered stretches follow at residues 791–908 and 924–1096; these read GEPV…NAYP and QLYA…GNTF. Ser-799 carries the post-translational modification Phosphoserine. The segment at 800–1113 is interaction with PDCD6; it reads PKIPYEKQQL…TKKITKKPIP (314 aa). Positions 842–848 match the ALG-2-binding site motif-2 (ABS-2) motif; the sequence is GFIMHGN. Residues 849 to 859 are compositionally biased toward polar residues; that stretch reads VNPNAAGQLPT. A compositionally biased stretch (pro residues) spans 869-882; sequence PPYPQPQPYQPAQP. Residues 962–972 are compositionally biased toward low complexity; it reads PSSSAYALPPG. 2 stretches are compositionally biased toward polar residues: residues 984-995 and 1031-1053; these read PASQRTGPQNGW and PQSQMLQQQPSAPVPLSSQSSFP. At Thr-1161 the chain carries Phosphothreonine. Ser-1163 is subject to Phosphoserine. Residue Lys-1217 forms a Glycyl lysine isopeptide (Lys-Gly) (interchain with G-Cter in ubiquitin) linkage.

This sequence belongs to the WD repeat SEC31 family. In terms of assembly, COPII is composed of at least 5 proteins: the SEC23/24 complex, the SEC13/31 complex and SAR1. SEC13 and SEC31 make a 2:2 tetramer that forms the edge element of the COPII outer coat. The tetramer self-assembles in multiple copies to form the complete polyhedral cage. Interacts (via WD 8) with SEC13. Interacts with PDCD6; interaction takes place in response to cytosolic calcium increase and leads to bridge together the BCR(KLHL12) complex and SEC31A, leading to monoubiquitination. Interacts with KLHL12. Post-translationally, monoubiquitinated by the BCR(KLHL12) E3 ubiquitin ligase complex, leading to regulate the size of COPII coats. Abundantly and ubiquitously expressed.

Its subcellular location is the cytoplasm. It is found in the cytoplasmic vesicle. The protein localises to the COPII-coated vesicle membrane. It localises to the endoplasmic reticulum membrane. The protein resides in the cytosol. In terms of biological role, component of the coat protein complex II (COPII) which promotes the formation of transport vesicles from the endoplasmic reticulum (ER). The coat has two main functions, the physical deformation of the endoplasmic reticulum membrane into vesicles and the selection of cargo molecules. This Homo sapiens (Human) protein is Protein transport protein Sec31A (SEC31A).